Reading from the N-terminus, the 842-residue chain is ATP-binding cassette sub-family B member 6 (842 aa).

At 1–26 (MVTVGNYCETEGPAGPAWTQNGLSPC) the chain is on the lumenal side. The tract at residues 1–205 (MVTVGNYCET…SGGLFILGLW (205 aa)) is required for the lysosomal targeting. A required for ATPase activity region spans residues 1–236 (MVTVGNYCET…GNQGRSTDRR (236 aa)). Cysteine 8 and cysteine 26 are joined by a disulfide. A helical membrane pass occupies residues 27-47 (FFFTLVPSTLLTLGVLALVLV). The Cytoplasmic segment spans residues 48 to 72 (LPRRRREVPAGPEELSWAAGPRVAP). A helical transmembrane segment spans residues 73-93 (YVLQLFLATLQMALPLAGLAG). The Lumenal segment spans residues 94–106 (RVGTARGVRLPGY). The chain crosses the membrane as a helical span at residues 107–127 (LLLASVLESLASVCGLWLLVV). At 128-147 (ERSQARQSLAMGVWMKFRHS) the chain is on the cytoplasmic side. The helical transmembrane segment at 148-168 (LGLLLLWTVTFAAENLALVSW) threads the bilayer. The Lumenal portion of the chain corresponds to 169-185 (NSPQWWWARADLGQQVQ). Residues 186–206 (FGLWVLRYVTSGGLFILGLWA) traverse the membrane as a helical segment. Over 207–263 (PGLRPQSYTLHVHEEDQDVGGNQGRSTDRRSTWRDLGRKLRLLSSYLWPRGSPSLQL) the chain is Cytoplasmic. A helical transmembrane segment spans residues 264–284 (IVLICLGLMGLERALNVLVPI). Residues 265 to 556 (VLICLGLMGL…FGTYYRMIQT (292 aa)) form the ABC transmembrane type-1 domain. Topologically, residues 285 to 291 (FYRDIVN) are lumenal. A helical membrane pass occupies residues 292–312 (LLTAKAPWSSLAWTVTTYVFL). At 313-375 (KFLQGGGTGS…TGEVLRIVDR (63 aa)) the chain is on the cytoplasmic side. The chain crosses the membrane as a helical span at residues 376 to 396 (GTSSVTGLLSYLVFSIIPTLA). Residue aspartate 397 is a topological domain, lumenal. The chain crosses the membrane as a helical span at residues 398–418 (IIIGIIYFSMFFNAWFGLIVF). Residues 419-499 (LCMSLYLILT…STASLVVLNQ (81 aa)) are Cytoplasmic-facing. The chain crosses the membrane as a helical span at residues 500–520 (TQNLVIGLGLLAGSLLCAYFV). Residues 521–529 (SEQKLQVGD) are Lumenal-facing. A helical membrane pass occupies residues 530 to 550 (FVLFGTYITQLYMPLNWFGTY). Residues 551 to 842 (YRMIQTNFID…PEESKPQDTA (292 aa)) lie on the Cytoplasmic side of the membrane. The 235-residue stretch at 590-824 (IEFENVHFSY…GGVYAEMWQL (235 aa)) folds into the ABC transporter domain. ATP is bound by residues tyrosine 599 and 623-634 (GPSGAGKSTILR).

It belongs to the ABC transporter superfamily. ABCB family. Heavy Metal importer (TC 3.A.1.210) subfamily. Homodimer. Post-translationally, N-glycosylated.

Its subcellular location is the cell membrane. The protein resides in the mitochondrion outer membrane. It localises to the endoplasmic reticulum membrane. It is found in the golgi apparatus membrane. The protein localises to the endosome membrane. Its subcellular location is the lysosome membrane. The protein resides in the late endosome membrane. It localises to the early endosome membrane. It is found in the secreted. The protein localises to the extracellular exosome. Its subcellular location is the mitochondrion. The protein resides in the endosome. It localises to the multivesicular body membrane. It is found in the melanosome membrane. The enzyme catalyses coproporphyrin III(in) + ATP + H2O = coproporphyrin III(out) + ADP + phosphate + H(+). It carries out the reaction coproporphyrinogen III(in) + ATP + H2O = coproporphyrinogen III(out) + ADP + phosphate + H(+). It catalyses the reaction heme b(in) + ATP + H2O = heme b(out) + ADP + phosphate + H(+). The catalysed reaction is pheophorbide a(in) + ATP + H2O = pheophorbide a(out) + ADP + phosphate + H(+). The enzyme catalyses protoporphyrin IX(in) + ATP + H2O = protoporphyrin IX(out) + ADP + phosphate + H(+). It carries out the reaction coproporphyrin I(in) + ATP + H2O = coproporphyrin I(out) + ADP + phosphate + H(+). It catalyses the reaction uroporphyrin I(in) + ATP + H2O = uroporphyrin I(out) + ADP + phosphate + H(+). The catalysed reaction is uroporphyrin III(in) + ATP + H2O = uroporphyrin III(out) + ADP + phosphate + H(+). ATP-dependent transporter that catalyzes the transport of a broad-spectrum of porphyrins from the cytoplasm to the extracellular space through the plasma membrane or into the vesicle lumen. May also function as an ATP-dependent importer of porphyrins from the cytoplasm into the mitochondria, in turn may participate in the de novo heme biosynthesis regulation and in the coordination of heme and iron homeostasis during phenylhydrazine stress. May play a key role in the early steps of melanogenesis producing PMEL amyloid fibrils. In vitro, it confers to cells a resistance to toxic metal such as arsenic and cadmium and against chemotherapeutics agent such as 5-fluorouracil, SN-38 and vincristin. In addition may play a role in the transition metal homeostasis. The polypeptide is ATP-binding cassette sub-family B member 6 (Mus musculus (Mouse)).